Reading from the N-terminus, the 549-residue chain is CTP synthase (549 aa).

The tract at residues 1-270 is amidoligase domain; sequence MTKFVFVTGG…DRLICEELRL (270 aa). Position 13 (Ser13) interacts with CTP. Position 13 (Ser13) interacts with UTP. ATP contacts are provided by residues 14–19 and Asp71; that span reads SLGKGI. Residues Asp71 and Glu144 each coordinate Mg(2+). CTP is bound by residues 151–153, 191–196, and Lys227; these read DIE and KTKPTQ. UTP-binding positions include 191-196 and Lys227; that span reads KTKPTQ. The region spanning 295–547 is the Glutamine amidotransferase type-1 domain; the sequence is TIGMVGKYVD…VEAALAAQRQ (253 aa). Gly356 contacts L-glutamine. Cys383 functions as the Nucleophile; for glutamine hydrolysis in the catalytic mechanism. L-glutamine is bound by residues 384–387, Glu407, and Arg473; that span reads LGMQ. Active-site residues include His520 and Glu522.

The protein belongs to the CTP synthase family. In terms of assembly, homotetramer.

The enzyme catalyses UTP + L-glutamine + ATP + H2O = CTP + L-glutamate + ADP + phosphate + 2 H(+). It carries out the reaction L-glutamine + H2O = L-glutamate + NH4(+). It catalyses the reaction UTP + NH4(+) + ATP = CTP + ADP + phosphate + 2 H(+). It participates in pyrimidine metabolism; CTP biosynthesis via de novo pathway; CTP from UDP: step 2/2. Allosterically activated by GTP, when glutamine is the substrate; GTP has no effect on the reaction when ammonia is the substrate. The allosteric effector GTP functions by stabilizing the protein conformation that binds the tetrahedral intermediate(s) formed during glutamine hydrolysis. Inhibited by the product CTP, via allosteric rather than competitive inhibition. Catalyzes the ATP-dependent amination of UTP to CTP with either L-glutamine or ammonia as the source of nitrogen. Regulates intracellular CTP levels through interactions with the four ribonucleotide triphosphates. This Cupriavidus metallidurans (strain ATCC 43123 / DSM 2839 / NBRC 102507 / CH34) (Ralstonia metallidurans) protein is CTP synthase.